A 99-amino-acid chain; its full sequence is Large ribosomal subunit protein bL27 (99 aa).

Positions 1–9 are excised as a propeptide; the sequence is MLLMNLQLF.

Belongs to the bacterial ribosomal protein bL27 family. Post-translationally, the N-terminus is cleaved by ribosomal processing cysteine protease Prp.

The protein is Large ribosomal subunit protein bL27 of Clostridium novyi (strain NT).